The sequence spans 103 residues: Putative membrane protein insertion efficiency factor (103 aa).

It belongs to the UPF0161 family.

The protein localises to the cell membrane. Functionally, could be involved in insertion of integral membrane proteins into the membrane. The sequence is that of Putative membrane protein insertion efficiency factor from Clavibacter michiganensis subsp. michiganensis (strain NCPPB 382).